The following is a 238-amino-acid chain: CASP-like protein 2BC2 (238 aa).

Residues 1–66 (MPSSTYPRRR…FHQKVAVEKR (66 aa)) are Cytoplasmic-facing. A helical transmembrane segment spans residues 67 to 87 (LKIGEVILRFAMIALALVAAV). Residues 88-111 (RVGTDTQTRTIFTIEKKAKYSDMK) are Extracellular-facing. Residues 112–132 (ALVFLVVMNGIVASYSLLQGL) form a helical membrane-spanning segment. At 133 to 148 (RCVLSIYTQSPLTSKP) the chain is on the cytoplasmic side. The helical transmembrane segment at 149-169 (LAWLIFALDQTMAYFSLAAAA) threads the bilayer. Topologically, residues 170-200 (AAAESAYLAERGQTEFQWMKVCIFYEKFCHQ) are extracellular. A helical membrane pass occupies residues 201 to 221 (IGEGLVSTFLVSLSMATVSGM). The Cytoplasmic segment spans residues 222-238 (SAYHLFRLYGSKGKSIQ).

It belongs to the Casparian strip membrane proteins (CASP) family. Homodimer and heterodimers.

The protein localises to the cell membrane. The polypeptide is CASP-like protein 2BC2 (Picea sitchensis (Sitka spruce)).